We begin with the raw amino-acid sequence, 76 residues long: MSIEERVKKIIVEQLGVKEDEVKPEASFVEDLGADSLDTVELVMALEEEFDIEIPDEEAEKITTVQSAIDYVQNNQ.

The Carrier domain maps to Met1 to Gln76. Ser36 carries the post-translational modification O-(pantetheine 4'-phosphoryl)serine.

This sequence belongs to the acyl carrier protein (ACP) family. Post-translationally, 4'-phosphopantetheine is transferred from CoA to a specific serine of apo-ACP by AcpS. This modification is essential for activity because fatty acids are bound in thioester linkage to the sulfhydryl of the prosthetic group.

The protein localises to the cytoplasm. Its pathway is lipid metabolism; fatty acid biosynthesis. Functionally, carrier of the growing fatty acid chain in fatty acid biosynthesis. The sequence is that of Acyl carrier protein from Pasteurella multocida (strain Pm70).